We begin with the raw amino-acid sequence, 241 residues long: MVKDTLFSTPIAKLGDFIFDENVAEVFPDMIQRSVPGYSNIITAIGMLAERFVTADSNVYDLGCSRGAATLSARRNIHQPNVKIIGIDNSQPMVERCRQHIAAYHSEIPVEILCNDIRHVEIKNASMVILNFTLQFLPPEDRVALLTKIYEGLNPNGVLVLSEKFRFEDTKIDHLLIDLHHQFKRANGYSELEVSQKRTALENVMRTDSIKTHKVRLKNVGFSQVELWFQCFNFGSMIAVK.

Residues Tyr-38, 63–65, 88–89, 116–117, Asn-131, and Arg-198 each bind S-adenosyl-L-methionine; these read GCS, DN, and DI.

Belongs to the class I-like SAM-binding methyltransferase superfamily. Cx-SAM synthase family. As to quaternary structure, homodimer.

It catalyses the reaction prephenate + S-adenosyl-L-methionine = carboxy-S-adenosyl-L-methionine + 3-phenylpyruvate + H2O. Functionally, catalyzes the conversion of S-adenosyl-L-methionine (SAM) to carboxy-S-adenosyl-L-methionine (Cx-SAM). The chain is Carboxy-S-adenosyl-L-methionine synthase from Haemophilus influenzae (strain PittGG).